Reading from the N-terminus, the 122-residue chain is Histone H2B.2 (122 aa).

The segment covering 1-10 has biased composition (low complexity); it reads MAPKKAPAAT. Residues 1-28 are disordered; it reads MAPKKAPAATTEKKVKKAPTTEKKNKKK. Residue A2 is modified to N,N,N-trimethylalanine. Residues K5 and K42 each carry the N6-acetyllysine modification. K116 is covalently cross-linked (Glycyl lysine isopeptide (Lys-Gly) (interchain with G-Cter in ubiquitin)).

This sequence belongs to the histone H2B family. As to quaternary structure, the nucleosome is a histone octamer containing two molecules each of H2A, H2B, H3 and H4 assembled in one H3-H4 heterotetramer and two H2A-H2B heterodimers. The octamer wraps approximately 147 bp of DNA. In terms of processing, acetylation occurs almost exclusively in the MAC. Monoubiquitination to form H2BK115ub1 gives a specific tag for epigenetic transcriptional activation and is also prerequisite for H3K4me and H3K79me formation.

Its subcellular location is the nucleus. The protein localises to the chromosome. Functionally, core component of nucleosome. Nucleosomes wrap and compact DNA into chromatin, limiting DNA accessibility to the cellular machineries which require DNA as a template. Histones thereby play a central role in transcription regulation, DNA repair, DNA replication and chromosomal stability. DNA accessibility is regulated via a complex set of post-translational modifications of histones, also called histone code, and nucleosome remodeling. The protein is Histone H2B.2 (HTB2) of Tetrahymena thermophila (strain SB210).